The sequence spans 90 residues: Small ribosomal subunit protein bS20 (90 aa).

Positions 1 to 10 are enriched in polar residues; it reads MANHKSTQKS. The disordered stretch occupies residues 1-25; it reads MANHKSTQKSIRQDQKRNLINKSRK.

It belongs to the bacterial ribosomal protein bS20 family.

Binds directly to 16S ribosomal RNA. This is Small ribosomal subunit protein bS20 from Orientia tsutsugamushi (strain Boryong) (Rickettsia tsutsugamushi).